Here is a 353-residue protein sequence, read N- to C-terminus: MKRLIPKHISILKPYQSARRIGIQGRIYLNANESPWINNIQYKFNNLNRYPEFQPYKLLKKYSLYSGVPINQILITRGADEGIEIITRTFCESNIDKIMFFPPTYDMYNVIANIFNIKKIIIPILSNFQLDIKNIKKKINNVKIIYICYPNNPTGNFFSRNKIIRIINSVSKTTLIVIDEAYIDFSIKYSFVSELNNFDNLIILRTLSKSFGLSAIRCGFVLSNVKIIKILKKVLAPYPISIPVSDIAIQSLCSQNIFLMQKNILRILKNKKFLIDQLKKISYIKNIFHSEANFILIKFAESKTIFKYLISKGIIVRDQSHNLGLKNCLRISIGTIHECQELINVLSIYKGKI.

Lysine 209 is modified (N6-(pyridoxal phosphate)lysine).

Belongs to the class-II pyridoxal-phosphate-dependent aminotransferase family. Histidinol-phosphate aminotransferase subfamily. As to quaternary structure, homodimer. Pyridoxal 5'-phosphate serves as cofactor.

It carries out the reaction L-histidinol phosphate + 2-oxoglutarate = 3-(imidazol-4-yl)-2-oxopropyl phosphate + L-glutamate. It participates in amino-acid biosynthesis; L-histidine biosynthesis; L-histidine from 5-phospho-alpha-D-ribose 1-diphosphate: step 7/9. This chain is Histidinol-phosphate aminotransferase, found in Buchnera aphidicola subsp. Cinara cedri (strain Cc).